A 409-amino-acid chain; its full sequence is Tyrosine--tRNA ligase (409 aa).

The 'HIGH' region motif lies at 54–63 (PTAPDIHLGH). A 'KMSKS' region motif is present at residues 238–242 (KMSKS). Lys241 provides a ligand contact to ATP. The S4 RNA-binding domain maps to 347 to 407 (MGILHVLRAS…GKRKFARVNL (61 aa)).

This sequence belongs to the class-I aminoacyl-tRNA synthetase family. TyrS type 2 subfamily. In terms of assembly, homodimer.

The protein resides in the cytoplasm. The enzyme catalyses tRNA(Tyr) + L-tyrosine + ATP = L-tyrosyl-tRNA(Tyr) + AMP + diphosphate + H(+). Catalyzes the attachment of tyrosine to tRNA(Tyr) in a two-step reaction: tyrosine is first activated by ATP to form Tyr-AMP and then transferred to the acceptor end of tRNA(Tyr). The chain is Tyrosine--tRNA ligase from Bordetella avium (strain 197N).